Reading from the N-terminus, the 226-residue chain is MNENLFASFATPTMMGLPIVILIIMFPSILFPSSNRLINNRLISIQQWLVQLTSKQMMTIHNNKGQTWTLMLMSLILFIGSTNLLGLLPHSFTPTTQLSMNLGMAIPLWAGTVFMGFRHKTKAALAHFLPQGTPIFLIPMLVIIETISLFIQPMALAVRLTANITAGHLLIHLIGGATLALMDISPSTALITFIILILLTILEFAVAMIQAYVFTLLVSLYLHDNT.

6 helical membrane-spanning segments follow: residues 12–32 (PTMMGLPIVILIIMFPSILFP), 68–88 (WTLMLMSLILFIGSTNLLGLL), 97–117 (QLSMNLGMAIPLWAGTVFMGF), 135–155 (IFLIPMLVIIETISLFIQPMA), 164–184 (ITAGHLLIHLIGGATLALMDI), and 189–209 (ALITFIILILLTILEFAVAMI).

This sequence belongs to the ATPase A chain family. Component of the ATP synthase complex composed at least of ATP5F1A/subunit alpha, ATP5F1B/subunit beta, ATP5MC1/subunit c (homooctomer), MT-ATP6/subunit a, MT-ATP8/subunit 8, ATP5ME/subunit e, ATP5MF/subunit f, ATP5MG/subunit g, ATP5MK/subunit k, ATP5MJ/subunit j, ATP5F1C/subunit gamma, ATP5F1D/subunit delta, ATP5F1E/subunit epsilon, ATP5PF/subunit F6, ATP5PB/subunit b, ATP5PD/subunit d, ATP5PO/subunit OSCP. ATP synthase complex consists of a soluble F(1) head domain (subunits alpha(3) and beta(3)) - the catalytic core - and a membrane F(0) domain - the membrane proton channel (subunits c, a, 8, e, f, g, k and j). These two domains are linked by a central stalk (subunits gamma, delta, and epsilon) rotating inside the F1 region and a stationary peripheral stalk (subunits F6, b, d, and OSCP). Interacts with DNAJC30; interaction is direct.

The protein localises to the mitochondrion inner membrane. The enzyme catalyses H(+)(in) = H(+)(out). Its function is as follows. Subunit a, of the mitochondrial membrane ATP synthase complex (F(1)F(0) ATP synthase or Complex V) that produces ATP from ADP in the presence of a proton gradient across the membrane which is generated by electron transport complexes of the respiratory chain. ATP synthase complex consist of a soluble F(1) head domain - the catalytic core - and a membrane F(1) domain - the membrane proton channel. These two domains are linked by a central stalk rotating inside the F(1) region and a stationary peripheral stalk. During catalysis, ATP synthesis in the catalytic domain of F(1) is coupled via a rotary mechanism of the central stalk subunits to proton translocation. With the subunit c (ATP5MC1), forms the proton-conducting channel in the F(0) domain, that contains two crucial half-channels (inlet and outlet) that facilitate proton movement from the mitochondrial intermembrane space (IMS) into the matrix. Protons are taken up via the inlet half-channel and released through the outlet half-channel, following a Grotthuss mechanism. In Equus asinus (Donkey), this protein is ATP synthase F(0) complex subunit a.